The chain runs to 313 residues: Methionyl-tRNA formyltransferase (313 aa).

113–116 (SLLP) contributes to the (6S)-5,6,7,8-tetrahydrofolate binding site.

It belongs to the Fmt family.

It carries out the reaction L-methionyl-tRNA(fMet) + (6R)-10-formyltetrahydrofolate = N-formyl-L-methionyl-tRNA(fMet) + (6S)-5,6,7,8-tetrahydrofolate + H(+). Its function is as follows. Attaches a formyl group to the free amino group of methionyl-tRNA(fMet). The formyl group appears to play a dual role in the initiator identity of N-formylmethionyl-tRNA by promoting its recognition by IF2 and preventing the misappropriation of this tRNA by the elongation apparatus. This Acidithiobacillus ferrooxidans (strain ATCC 23270 / DSM 14882 / CIP 104768 / NCIMB 8455) (Ferrobacillus ferrooxidans (strain ATCC 23270)) protein is Methionyl-tRNA formyltransferase.